We begin with the raw amino-acid sequence, 296 residues long: Adrenocorticotropic hormone receptor (296 aa).

At 1-23 (MKHIINSYEHTNDTARNNSDCPD) the chain is on the extracellular side. N-linked (GlcNAc...) asparagine glycosylation is found at N12 and N17. 2 cysteine pairs are disulfide-bonded: C21/C253 and C245/C251. Residues 24–49 (VVLPEEIFFTISVIGILENLIVLLAV) form a helical membrane-spanning segment. Topologically, residues 50–58 (IKNKNLQSP) are cytoplasmic. The chain crosses the membrane as a helical span at residues 59–79 (MYFFICSLAISDMLGSLYKIL). Topologically, residues 80–104 (ENILIMFRNMGYLKPRGSFESTADD) are extracellular. A helical membrane pass occupies residues 105–126 (IIDCMFILSLLGSIFSLSVIAA). Residues 127-147 (DRYITIFHALQYHSIVTMRRT) are Cytoplasmic-facing. The chain crosses the membrane as a helical span at residues 148 to 168 (IITLTIIWMFCTGSGITMVIF). Residues 169–180 (SHHIPTVLTFTS) lie on the Extracellular side of the membrane. Residues 181–199 (LFPLMLVFILCLYIHMFLL) traverse the membrane as a helical segment. Over 200–217 (ARSHARKISTLPRTNMKG) the chain is Cytoplasmic. Residues 218 to 244 (AMTLTILLGVFIFCWAPFVLHVLLMTF) form a helical membrane-spanning segment. The Extracellular segment spans residues 245–256 (CPNNPYCVCYMS). A helical transmembrane segment spans residues 257 to 278 (LFQVNGMLIMCNAVIDPFIYAF). The Cytoplasmic portion of the chain corresponds to 279-296 (RSPELRDAFKRMLFCNRY). C293 carries S-palmitoyl cysteine lipidation.

Belongs to the G-protein coupled receptor 1 family. As to quaternary structure, homodimer. Interacts with corticotropin (ACTH). Interacts with MRAP; this interaction targets MC2R to the plasma membrane. Interacts with MRAP2; competing with MRAP for binding to MC2R and impairing the binding of corticotropin (ACTH). In terms of processing, ubiquitinated by MGRN1 that may be involved in post-endocytic trafficking and/or degradation of internalized receptor.

It localises to the cell membrane. Functionally, hormone receptor primarily expressed in adrenal cortex that plays a key role in regulating adrenocortical function. Upon corticotropin (ACTH) binding, facilitates the release of adrenal glucocorticoids, including cortisol and corticosterone. In addition, MC2R is required for fetal and neonatal adrenal gland development. Mechanistically, activates adenylate cyclase (cAMP), the MAPK cascade as well as the cAMP-dependent protein kinase A pathway leading to steroidogenic factor 1/NR5A1-mediated transcriptional activation. The polypeptide is Adrenocorticotropic hormone receptor (Mc2r) (Mus musculus (Mouse)).